The sequence spans 431 residues: 3-phosphoshikimate 1-carboxyvinyltransferase (431 aa).

3-phosphoshikimate-binding residues include K23, S24, and R28. K23 provides a ligand contact to phosphoenolpyruvate. Residues G96 and R124 each coordinate phosphoenolpyruvate. 4 residues coordinate 3-phosphoshikimate: S169, Q171, D317, and K344. Q171 serves as a coordination point for phosphoenolpyruvate. The active-site Proton acceptor is D317. Residues R348 and R390 each coordinate phosphoenolpyruvate.

Belongs to the EPSP synthase family. In terms of assembly, monomer.

It is found in the cytoplasm. It catalyses the reaction 3-phosphoshikimate + phosphoenolpyruvate = 5-O-(1-carboxyvinyl)-3-phosphoshikimate + phosphate. It participates in metabolic intermediate biosynthesis; chorismate biosynthesis; chorismate from D-erythrose 4-phosphate and phosphoenolpyruvate: step 6/7. Catalyzes the transfer of the enolpyruvyl moiety of phosphoenolpyruvate (PEP) to the 5-hydroxyl of shikimate-3-phosphate (S3P) to produce enolpyruvyl shikimate-3-phosphate and inorganic phosphate. The chain is 3-phosphoshikimate 1-carboxyvinyltransferase from Syntrophotalea carbinolica (strain DSM 2380 / NBRC 103641 / GraBd1) (Pelobacter carbinolicus).